The chain runs to 463 residues: L-seryl-tRNA(Sec) selenium transferase (463 aa).

Residue lysine 295 is modified to N6-(pyridoxal phosphate)lysine.

It belongs to the SelA family. In terms of assembly, homodecamer; pentamer of dimers. Binds only one seryl-tRNA(Sec) per dimer. It depends on pyridoxal 5'-phosphate as a cofactor.

The protein resides in the cytoplasm. It catalyses the reaction L-seryl-tRNA(Sec) + selenophosphate + H(+) = L-selenocysteinyl-tRNA(Sec) + phosphate. It participates in aminoacyl-tRNA biosynthesis; selenocysteinyl-tRNA(Sec) biosynthesis; selenocysteinyl-tRNA(Sec) from L-seryl-tRNA(Sec) (bacterial route): step 1/1. In terms of biological role, converts seryl-tRNA(Sec) to selenocysteinyl-tRNA(Sec) required for selenoprotein biosynthesis. The polypeptide is L-seryl-tRNA(Sec) selenium transferase (Shigella flexneri serotype 5b (strain 8401)).